The chain runs to 141 residues: Proteasome maturation protein (141 aa).

Lysine 39 participates in a covalent cross-link: Glycyl lysine isopeptide (Lys-Gly) (interchain with G-Cter in SUMO2).

Belongs to the POMP/UMP1 family. As to quaternary structure, constituent of preproteasomes, but not of mature 20S proteasomes. Within the preproteasome, may directly interact with PSMB1/beta6, PSMB4/beta7, PSMB5/beta5, PSMB6/beta1 and PSMB9/beta1i. Interaction with PSMB8/beta5i is controversial. Forms tetramers.

It localises to the cytoplasm. Its subcellular location is the cytosol. It is found in the nucleus. The protein resides in the microsome membrane. Molecular chaperone essential for the assembly of standard proteasomes and immunoproteasomes. Degraded after completion of proteasome maturation. Mediates the association of 20S preproteasome with the endoplasmic reticulum. The protein is Proteasome maturation protein (POMP) of Bos taurus (Bovine).